The following is a 266-amino-acid chain: MAAAVAAAARGCWQRLVGSAAPARVAGRPSVLLLPVRRESSAADTRPTVRPRNDVAHKQLSAFGEYVAEILPKYVQQVQVSCFNELEICIHPDGVIPVLTFLRDHSNAQFKSLADLTAVDIPTRQNRFEIVYNLLSLRFNSRIRVKTYTDELTPIESSVPVYKAANWYEREIWDMFGVFFANHPDLRRILTDYGFEGHPFRKDFPLSGYVELRYDDEVKRVVAEPVELAQEFRKFDLNSPWEAFPAYRQPPESLKLEAGDTKPEAK.

A mitochondrion-targeting transit peptide spans 1-38 (MAAAVAAAARGCWQRLVGSAAPARVAGRPSVLLLPVRR).

It belongs to the complex I 30 kDa subunit family. As to quaternary structure, core subunit of respiratory chain NADH dehydrogenase (Complex I) which is composed of 45 different subunits. Interacts with NDUFAF3. Interacts with RAB5IF. Found in subcomplexes containing subunits NDUFS2, MT-ND1 and NDUFA13.

It is found in the mitochondrion inner membrane. It carries out the reaction a ubiquinone + NADH + 5 H(+)(in) = a ubiquinol + NAD(+) + 4 H(+)(out). Functionally, core subunit of the mitochondrial membrane respiratory chain NADH dehydrogenase (Complex I) which catalyzes electron transfer from NADH through the respiratory chain, using ubiquinone as an electron acceptor. Essential for the catalytic activity and assembly of complex I. The protein is NADH dehydrogenase [ubiquinone] iron-sulfur protein 3, mitochondrial (NDUFS3) of Bos taurus (Bovine).